A 203-amino-acid polypeptide reads, in one-letter code: Large ribosomal subunit protein bL25 (203 aa).

This sequence belongs to the bacterial ribosomal protein bL25 family. CTC subfamily. Part of the 50S ribosomal subunit; part of the 5S rRNA/L5/L18/L25 subcomplex. Contacts the 5S rRNA. Binds to the 5S rRNA independently of L5 and L18.

Functionally, this is one of the proteins that binds to the 5S RNA in the ribosome where it forms part of the central protuberance. The protein is Large ribosomal subunit protein bL25 of Dechloromonas aromatica (strain RCB).